The primary structure comprises 292 residues: 1D-myo-inositol 2-acetamido-2-deoxy-alpha-D-glucopyranoside deacetylase (292 aa).

The Zn(2+) site is built by histidine 11, aspartate 14, and histidine 146.

This sequence belongs to the MshB deacetylase family. The cofactor is Zn(2+).

It carries out the reaction 1D-myo-inositol 2-acetamido-2-deoxy-alpha-D-glucopyranoside + H2O = 1D-myo-inositol 2-amino-2-deoxy-alpha-D-glucopyranoside + acetate. In terms of biological role, catalyzes the deacetylation of 1D-myo-inositol 2-acetamido-2-deoxy-alpha-D-glucopyranoside (GlcNAc-Ins) in the mycothiol biosynthesis pathway. This chain is 1D-myo-inositol 2-acetamido-2-deoxy-alpha-D-glucopyranoside deacetylase, found in Acidothermus cellulolyticus (strain ATCC 43068 / DSM 8971 / 11B).